We begin with the raw amino-acid sequence, 437 residues long: Diaminopimelate decarboxylase (437 aa).

An N6-(pyridoxal phosphate)lysine modification is found at K81. Pyridoxal 5'-phosphate is bound by residues G256 and 298 to 301 (EPGR). Positions 301, 337, and 341 each coordinate substrate. C366 serves as the catalytic Proton donor. Substrate contacts are provided by E367 and Y396. Residue Y396 participates in pyridoxal 5'-phosphate binding.

It belongs to the Orn/Lys/Arg decarboxylase class-II family. LysA subfamily. Homodimer. The cofactor is pyridoxal 5'-phosphate.

It catalyses the reaction meso-2,6-diaminopimelate + H(+) = L-lysine + CO2. It functions in the pathway amino-acid biosynthesis; L-lysine biosynthesis via DAP pathway; L-lysine from DL-2,6-diaminopimelate: step 1/1. In terms of biological role, specifically catalyzes the decarboxylation of meso-diaminopimelate (meso-DAP) to L-lysine. This chain is Diaminopimelate decarboxylase, found in Actinosynnema pretiosum subsp. auranticum.